The sequence spans 161 residues: ATP synthase subunit b 1 (161 aa).

The helical transmembrane segment at phenylalanine 3–leucine 23 threads the bilayer.

The protein belongs to the ATPase B chain family. As to quaternary structure, F-type ATPases have 2 components, F(1) - the catalytic core - and F(0) - the membrane proton channel. F(1) has five subunits: alpha(3), beta(3), gamma(1), delta(1), epsilon(1). F(0) has three main subunits: a(1), b(2) and c(10-14). The alpha and beta chains form an alternating ring which encloses part of the gamma chain. F(1) is attached to F(0) by a central stalk formed by the gamma and epsilon chains, while a peripheral stalk is formed by the delta and b chains.

It is found in the cell inner membrane. Functionally, f(1)F(0) ATP synthase produces ATP from ADP in the presence of a proton or sodium gradient. F-type ATPases consist of two structural domains, F(1) containing the extramembraneous catalytic core and F(0) containing the membrane proton channel, linked together by a central stalk and a peripheral stalk. During catalysis, ATP synthesis in the catalytic domain of F(1) is coupled via a rotary mechanism of the central stalk subunits to proton translocation. Component of the F(0) channel, it forms part of the peripheral stalk, linking F(1) to F(0). This Agrobacterium fabrum (strain C58 / ATCC 33970) (Agrobacterium tumefaciens (strain C58)) protein is ATP synthase subunit b 1.